The sequence spans 874 residues: Coatomer subunit gamma-1 (874 aa).

The span at 1-11 (MLKKFDKKDEE) shows a compositional bias: basic and acidic residues. Residues 1 to 21 (MLKKFDKKDEESGGGSNPFQH) form a disordered region. HEAT repeat units follow at residues 64–101 (TEATEAFFAMTKLFQSNDPTLRRMCYLTIKEMSCIAED), 283–320 (KELAPAVSVLQLFCSSPKAALRYAAVRTLNKVAMKHPS), 322–355 (VTACNLDLENLVTDSNRSIATLAITTLLKTGSES), and 356–392 (SIDRLMKQISSFMSEISDEFKVVVVQAISALCQKYPR). Thr-594 carries the phosphothreonine modification. Positions 609–874 (RQEIFQEQLA…PVDIILASVG (266 aa)) are interaction with ZNF289/ARFGAP2.

This sequence belongs to the COPG family. As to quaternary structure, oligomeric complex that consists of at least the alpha, beta, beta', gamma, delta, epsilon and zeta subunits. Interacts with ZNF289/ARFGAP2 through its C-terminal appendage domain. Interacts with EGFR upon EGF treatment; interaction is essential for regulation of EGF-dependent nuclear transport of EGFR by retrograde trafficking from the Golgi to the ER. The coatomer interacts with KDEL receptors; the interaction is important for retrograde trafficking of KDEL-bearing proteins from the Golgi to the endoplasmic reticulum. Interacts with COPB1. Interacts with TMED10 (via C-terminus). Interacts with TMED2, TMED3, TMED7 and TMED9.

It is found in the cytoplasm. Its subcellular location is the golgi apparatus membrane. The protein localises to the cytoplasmic vesicle. The protein resides in the COPI-coated vesicle membrane. Functionally, the coatomer is a cytosolic protein complex that binds to dilysine motifs and reversibly associates with Golgi non-clathrin-coated vesicles, which further mediate biosynthetic protein transport from the ER, via the Golgi up to the trans Golgi network. Coatomer complex is required for budding from Golgi membranes, and is essential for the retrograde Golgi-to-ER transport of dilysine-tagged proteins. In mammals, the coatomer can only be recruited by membranes associated to ADP-ribosylation factors (ARFs), which are small GTP-binding proteins; the complex also influences the Golgi structural integrity, as well as the processing, activity, and endocytic recycling of LDL receptors. Required for limiting lipid storage in lipid droplets. Involved in lipid homeostasis by regulating the presence of perilipin family members PLIN2 and PLIN3 at the lipid droplet surface and promoting the association of adipocyte triglyceride lipase (PNPLA2) with the lipid droplet surface to mediate lipolysis. The polypeptide is Coatomer subunit gamma-1 (COPG1) (Homo sapiens (Human)).